Here is a 257-residue protein sequence, read N- to C-terminus: tRNA uridine(34) hydroxylase (257 aa).

The Rhodanese domain maps to 128–222 (NGRRLVMLDA…YFEQVGGEGY (95 aa)). Catalysis depends on Cys-182, which acts as the Cysteine persulfide intermediate.

It belongs to the TrhO family.

The catalysed reaction is uridine(34) in tRNA + AH2 + O2 = 5-hydroxyuridine(34) in tRNA + A + H2O. Its function is as follows. Catalyzes oxygen-dependent 5-hydroxyuridine (ho5U) modification at position 34 in tRNAs. The chain is tRNA uridine(34) hydroxylase from Xylella fastidiosa (strain 9a5c).